Consider the following 157-residue polypeptide: Arginine repressor (157 aa).

This sequence belongs to the ArgR family.

It localises to the cytoplasm. It participates in amino-acid biosynthesis; L-arginine biosynthesis [regulation]. Its function is as follows. Regulates arginine biosynthesis genes. The protein is Arginine repressor of Deinococcus deserti (strain DSM 17065 / CIP 109153 / LMG 22923 / VCD115).